An 877-amino-acid chain; its full sequence is DNA polymerase I (877 aa).

The region spanning 177 to 270 (TPAQFIDLKA…LEDLVYSGPD (94 aa)) is the 5'-3' exonuclease domain. In terms of domain architecture, 3'-5' exonuclease spans 302–465 (DFTIVDQISQ…TEPILLEKLS (164 aa)).

The protein belongs to the DNA polymerase type-A family. Single-chain monomer with multiple functions.

The catalysed reaction is DNA(n) + a 2'-deoxyribonucleoside 5'-triphosphate = DNA(n+1) + diphosphate. Its function is as follows. In addition to polymerase activity, this DNA polymerase exhibits 3'-5' and 5'-3' exonuclease activity. The sequence is that of DNA polymerase I (polA) from Streptococcus pneumoniae (strain ATCC BAA-255 / R6).